Reading from the N-terminus, the 120-residue chain is Large ribosomal subunit protein bL19 (120 aa).

The protein belongs to the bacterial ribosomal protein bL19 family.

In terms of biological role, this protein is located at the 30S-50S ribosomal subunit interface and may play a role in the structure and function of the aminoacyl-tRNA binding site. This chain is Large ribosomal subunit protein bL19, found in Microcystis aeruginosa (strain NIES-843 / IAM M-2473).